The chain runs to 341 residues: Phenylalanine--tRNA ligase alpha subunit (341 aa).

Position 256 (Glu256) interacts with Mg(2+).

It belongs to the class-II aminoacyl-tRNA synthetase family. Phe-tRNA synthetase alpha subunit type 1 subfamily. Tetramer of two alpha and two beta subunits. Mg(2+) serves as cofactor.

It localises to the cytoplasm. It catalyses the reaction tRNA(Phe) + L-phenylalanine + ATP = L-phenylalanyl-tRNA(Phe) + AMP + diphosphate + H(+). In Chlamydia caviae (strain ATCC VR-813 / DSM 19441 / 03DC25 / GPIC) (Chlamydophila caviae), this protein is Phenylalanine--tRNA ligase alpha subunit.